Consider the following 493-residue polypeptide: Glycogen synthase 1 (493 aa).

K15 is an ADP-alpha-D-glucose binding site.

The protein belongs to the glycosyltransferase 1 family. Bacterial/plant glycogen synthase subfamily.

It catalyses the reaction [(1-&gt;4)-alpha-D-glucosyl](n) + ADP-alpha-D-glucose = [(1-&gt;4)-alpha-D-glucosyl](n+1) + ADP + H(+). It functions in the pathway glycan biosynthesis; glycogen biosynthesis. Functionally, synthesizes alpha-1,4-glucan chains using ADP-glucose. The polypeptide is Glycogen synthase 1 (Methylococcus capsulatus (strain ATCC 33009 / NCIMB 11132 / Bath)).